The sequence spans 101 residues: Urease subunit beta (101 aa).

Belongs to the urease beta subunit family. In terms of assembly, heterotrimer of UreA (gamma), UreB (beta) and UreC (alpha) subunits. Three heterotrimers associate to form the active enzyme.

It localises to the cytoplasm. The enzyme catalyses urea + 2 H2O + H(+) = hydrogencarbonate + 2 NH4(+). It participates in nitrogen metabolism; urea degradation; CO(2) and NH(3) from urea (urease route): step 1/1. In Ruegeria pomeroyi (strain ATCC 700808 / DSM 15171 / DSS-3) (Silicibacter pomeroyi), this protein is Urease subunit beta.